The sequence spans 25 residues: Ocellatin-1 (25 aa).

Val-25 carries the valine amide modification.

Expressed by the skin dorsal glands.

The protein localises to the secreted. In terms of biological role, has hemolytic activity against human erythrocytes and antibacterial activity against the Gram-negative bacterium E.coli. The polypeptide is Ocellatin-1 (Leptodactylus ocellatus (Argus frog)).